The chain runs to 526 residues: Peptide chain release factor 3 (526 aa).

Residues 8–277 (NKRRTFAIIS…GLTEWAPKPQ (270 aa)) form the tr-type G domain. GTP-binding positions include 17 to 24 (SHPDAGKT), 85 to 89 (DTPGH), and 139 to 142 (NKLD).

It belongs to the TRAFAC class translation factor GTPase superfamily. Classic translation factor GTPase family. PrfC subfamily.

The protein localises to the cytoplasm. Its function is as follows. Increases the formation of ribosomal termination complexes and stimulates activities of RF-1 and RF-2. It binds guanine nucleotides and has strong preference for UGA stop codons. It may interact directly with the ribosome. The stimulation of RF-1 and RF-2 is significantly reduced by GTP and GDP, but not by GMP. The polypeptide is Peptide chain release factor 3 (Actinobacillus pleuropneumoniae serotype 7 (strain AP76)).